The chain runs to 497 residues: Probable small intestine urate exporter (497 aa).

Residues Asn47, Asn56, Asn66, Asn75, and Asn90 are each glycosylated (N-linked (GlcNAc...) asparagine). 10 consecutive transmembrane segments (helical) span residues 149-169, 171-191, 203-223, 230-250, 292-312, 332-352, 368-388, 398-418, 431-451, and 461-481; these read SFLT…LIVL, IVQG…WVKW, IAGS…GLLC, YVFY…FPLI, LPLW…YTIM, ILSA…GLLA, KLFT…LPWV, FLVL…VNFL, LLQV…GFFI, and NVFL…LIFG.

The protein belongs to the major facilitator superfamily. Sodium/anion cotransporter family. Abundantly expressed in pancreas, liver, colon and small intestine, less in kidney. Not detected in the adrenal glands, brain, placenta, heart, testis, skeletal muscle, and lungs.

It is found in the apical cell membrane. The catalysed reaction is 3 Na(+)(out) + phosphate(out) = 3 Na(+)(in) + phosphate(in). It catalyses the reaction urate(out) + n chloride(in) = urate(in) + n chloride(out). The enzyme catalyses L-thyroxine(out) = L-thyroxine(in). It carries out the reaction 3,3',5-triiodo-L-thyronine(out) = 3,3',5-triiodo-L-thyronine(in). Acts as a membrane potential-dependent organic anion transporter, the transport requires a low concentration of chloride ions. Mediates chloride-dependent transport of urate. Mediates sodium-independent high affinity transport of thyroid hormones including L-thyroxine (T4) and 3,3',5-triiodo-L-thyronine (T3). Can actively transport inorganic phosphate into cells via Na(+) cotransport. This is Probable small intestine urate exporter (SLC17A4) from Homo sapiens (Human).